The following is a 61-amino-acid chain: Small ribosomal subunit protein uS14B (61 aa).

Zn(2+) is bound by residues cysteine 24, cysteine 27, cysteine 40, and cysteine 43.

The protein belongs to the universal ribosomal protein uS14 family. Zinc-binding uS14 subfamily. In terms of assembly, part of the 30S ribosomal subunit. Contacts proteins S3 and S10. Zn(2+) is required as a cofactor.

Binds 16S rRNA, required for the assembly of 30S particles and may also be responsible for determining the conformation of the 16S rRNA at the A site. In Myxococcus xanthus (strain DK1622), this protein is Small ribosomal subunit protein uS14B.